Consider the following 426-residue polypeptide: Cdc25-like protein phosphatase twine (426 aa).

The segment at 1-27 is disordered; that stretch reads MASKRLMLDVEEEDDESGACGQENFDP. One can recognise a Rhodanese domain in the interval 265-371; that stretch reads SQGGYEIIDC…FFGLYSQLCQ (107 aa). Residue C318 is part of the active site.

This sequence belongs to the MPI phosphatase family. As to expression, expressed in developing male and female germ cells.

The enzyme catalyses O-phospho-L-tyrosyl-[protein] + H2O = L-tyrosyl-[protein] + phosphate. Required during meiosis. Regulates the transition from the extended G2 phase to the onset of the first meiotic division. The chain is Cdc25-like protein phosphatase twine (twe) from Drosophila melanogaster (Fruit fly).